Reading from the N-terminus, the 422-residue chain is MLQWRRRHCCFAKMTWNAKRSLFRTHLIGVLSLVFLFAMFLFFNHHDWLPGRAGFKENPVTYTFRGFRSTKSETNHSSLRNIWKETVPQTLRPQTATNSNNTDLSPQGVTGLENTLSANGSIYNEKGTGYPNSYHFKYIINEPEKCQEKSPFLILLIAAEPGQIEARRAIRQTWGNESLAPGIQITRIFLLGLSIKLNGYLQRAILEESRQYHDIIQQEYLDTYYNLTIKTLMGMNWVATYCPHIPYVMKTDSDMFVNTEYLINKLLKPDLPPRHNYFTGYLMRGYAPNRNKDSKWYMPPDLYPSERYPVFCSGTGYVFSGDLAEKIFKVSLGIRRLHLEDVYVGICLAKLRIDPVPPPNEFVFNHWRVSYSSCKYSHLITSHQFQPSELIKYWNHLQQNKHNACANAAKEKAGRYRHRKLH.

Residues 1-24 are Cytoplasmic-facing; sequence MLQWRRRHCCFAKMTWNAKRSLFR. Residues 25–45 traverse the membrane as a helical; Signal-anchor for type II membrane protein segment; sequence THLIGVLSLVFLFAMFLFFNH. Over 46-422 the chain is Lumenal; sequence HDWLPGRAGF…AGRYRHRKLH (377 aa). N-linked (GlcNAc...) asparagine glycosylation is found at N75, N100, N119, N176, and N226. Residues 90–110 form a disordered region; that stretch reads TLRPQTATNSNNTDLSPQGVT.

This sequence belongs to the glycosyltransferase 31 family. The cofactor is Mn(2+).

The protein localises to the golgi apparatus membrane. The catalysed reaction is an N-acetyl-beta-D-glucosaminyl derivative + UDP-alpha-D-galactose = a beta-D-galactosyl-(1-&gt;3)-N-acetyl-beta-D-glucosaminyl derivative + UDP + H(+). The enzyme catalyses a beta-D-GlcNAc-(1-&gt;3)-beta-D-Gal-(1-&gt;4)-beta-D-Glc-(1&lt;-&gt;1)-Cer(d18:1(4E)) + UDP-alpha-D-galactose = a beta-D-Gal-(1-&gt;3)-beta-D-GlcNAc-(1-&gt;3)-beta-D-Gal-(1-&gt;4)-beta-D-Glc-(1&lt;-&gt;1')-Cer(d18:1(4E)) + UDP + H(+). It carries out the reaction a neolactoside IV(3)-beta-GlcNAc-nLc4Cer(d18:1(4E)) + UDP-alpha-D-galactose = a neolactoside IV(3)-beta-[Gal-beta-(1-&gt;3)-GlcNAc]-nLc4Cer(d18:1(4E)) + UDP + H(+). It participates in protein modification; protein glycosylation. Its function is as follows. Beta-1,3-galactosyltransferase that transfers galactose from UDP-galactose to substrates with a terminal beta-N-acetylglucosamine (beta-GlcNAc) residue. Can also utilize substrates with a terminal galactose residue, albeit with lower efficiency. Involved in the biosynthesis of the carbohydrate moieties of glycolipids and glycoproteins. Inactive towards substrates with terminal alpha-N-acetylglucosamine (alpha-GlcNAc) or alpha-N-acetylgalactosamine (alpha-GalNAc) residues. This is Beta-1,3-galactosyltransferase 2 (B3GALT2) from Pongo abelii (Sumatran orangutan).